Here is a 262-residue protein sequence, read N- to C-terminus: Spindlin-1 (262 aa).

Residues 1 to 49 form a disordered region; sequence MKTPFGKTPGQRSRADAGHAGVSANMMKKRTSHKKHRTSVGPSKPVSQP. Glycyl lysine isopeptide (Lys-Gly) (interchain with G-Cter in SUMO2) cross-links involve residues K7 and K28. Residues 27-38 are compositionally biased toward basic residues; the sequence is MKKRTSHKKHRT. K44 bears the N6-acetyllysine; alternate mark. A Glycyl lysine isopeptide (Lys-Gly) (interchain with G-Cter in SUMO2); alternate cross-link involves residue K44. The interval 53 to 116 is tudor-like domain 1; sequence IVGCRIQHGW…RVSALEVLPD (64 aa). The histone H3K4me3 and H3R8me2a binding stretch occupies residues 93 to 98; it reads GFDCVY. Residues S109 and S124 each carry the phosphoserine; by AURKA modification. The tract at residues 132–193 is tudor-like domain 2; it reads MIGKAVEHMF…DYKEGDLRIM (62 aa). E142 is a region of interest (histone H3K4me3 and H3R8me2a binding). Position 199 is a phosphoserine (S199). Positions 213–262 are tudor-like domain 3; that stretch reads LVGKQVEYAKEDGSKRTGMVIHQVEAKPSVYFIKFDDDFHIYVYDLVKTS. Residues 250-252 form a histone H3K4me3 and H3R8me2a binding region; the sequence is DFH.

The protein belongs to the SPIN/STSY family. In terms of assembly, homodimer; may form higher-order oligomers. Interacts with TCF7L2/TCF4; the interaction is direct. Interacts with HABP4 and SERBP1. Interacts with SPINDOC; SPINDOC stabilizes SPIN1 and enhances its association with bivalent H3K4me3K9me3 mark. Interacts with SPOCD1; promoting recruitment of PIWIL4 and SPOCD1 to transposons. Post-translationally, phosphorylated during oocyte meiotic maturation.

Its subcellular location is the nucleus. The protein resides in the nucleolus. Its function is as follows. Chromatin reader that specifically recognizes and binds histone H3 both trimethylated at 'Lys-4' and 'Lys-9' (H3K4me3K9me3) and is involved in piRNA-mediated retrotransposon silencing during spermatogenesis. Plays a key role in the initiation of the PIWIL4-piRNA pathway, a pathway that directs transposon DNA methylation and silencing in the male embryonic germ cells, by promoting recruitment of DNA methylation machinery to transposons: binds young, but not old, LINE1 transposons, which are specifically marked with H3K4me3K9me3, and promotes the recruitment of PIWIL4 and SPOCD1 to transposons, leading to piRNA-directed DNA methylation. Also recognizes and binds histone H3 both trimethylated at 'Lys-4' and asymmetrically dimethylated at 'Arg-8' (H3K4me3 and H3R8me2a) and acts as an activator of Wnt signaling pathway downstream of PRMT2. Overexpression induces metaphase arrest and chromosomal instability. Overexpression induces metaphase arrest and chromosomal instability. Localizes to active rDNA loci and promotes the expression of rRNA genes. May play a role in cell-cycle regulation during the transition from gamete to embryo. Involved in oocyte meiotic resumption, a process that takes place before ovulation to resume meiosis of oocytes blocked in prophase I: may act by regulating maternal transcripts to control meiotic resumption. This chain is Spindlin-1 (Spin1), found in Rattus norvegicus (Rat).